The chain runs to 92 residues: MTTRGAVIQAAHYAETEARLQRDHIIVTMSVEMNRALPAEKASWVHEDGSPRFHFMQAANREYSRRGGKGGGHIGAVANALLANLKILEGDE.

The protein is Gene 80 protein (80) of Mycobacterium phage L5 (Mycobacteriophage L5).